The sequence spans 96 residues: MSSISLSVLDDSVLIKPINEEKQGGIVLPSSAEKKPTKGEVIAIGEGSRNSSGERIALTVKAGDKVFYRQWAGTEIEHGSEKLIVMKESDILAIIK.

This sequence belongs to the GroES chaperonin family. As to quaternary structure, heptamer of 7 subunits arranged in a ring. Interacts with the chaperonin GroEL.

The protein localises to the cytoplasm. In terms of biological role, together with the chaperonin GroEL, plays an essential role in assisting protein folding. The GroEL-GroES system forms a nano-cage that allows encapsulation of the non-native substrate proteins and provides a physical environment optimized to promote and accelerate protein folding. GroES binds to the apical surface of the GroEL ring, thereby capping the opening of the GroEL channel. The sequence is that of Co-chaperonin GroES from Wolbachia sp. subsp. Brugia malayi (strain TRS).